The primary structure comprises 235 residues: Large ribosomal subunit protein uL1 (235 aa).

Belongs to the universal ribosomal protein uL1 family. Part of the 50S ribosomal subunit.

Binds directly to 23S rRNA. The L1 stalk is quite mobile in the ribosome, and is involved in E site tRNA release. In terms of biological role, protein L1 is also a translational repressor protein, it controls the translation of the L11 operon by binding to its mRNA. This chain is Large ribosomal subunit protein uL1, found in Mycobacterium bovis (strain ATCC BAA-935 / AF2122/97).